The chain runs to 282 residues: Protoheme IX farnesyltransferase (282 aa).

The next 8 helical transmembrane spans lie at 40–60 (LVLA…FNMV), 87–107 (AVLA…AVNP), 108–128 (YVFV…TVLL), 135–157 (SVVF…ATGG), 162–184 (GVLL…STYY), 204–224 (AGVV…FLAF), 228–248 (LISA…VAVL), and 261–281 (AYRA…LLVL).

The protein belongs to the UbiA prenyltransferase family. Protoheme IX farnesyltransferase subfamily.

The protein resides in the cell membrane. It carries out the reaction heme b + (2E,6E)-farnesyl diphosphate + H2O = Fe(II)-heme o + diphosphate. It participates in porphyrin-containing compound metabolism; heme O biosynthesis; heme O from protoheme: step 1/1. Converts heme B (protoheme IX) to heme O by substitution of the vinyl group on carbon 2 of heme B porphyrin ring with a hydroxyethyl farnesyl side group. In Thermofilum pendens (strain DSM 2475 / Hrk 5), this protein is Protoheme IX farnesyltransferase.